Here is a 431-residue protein sequence, read N- to C-terminus: tRNA(Ile)-lysidine synthase (431 aa).

Residue 25-30 (SGGPDS) participates in ATP binding.

Belongs to the tRNA(Ile)-lysidine synthase family.

It localises to the cytoplasm. It carries out the reaction cytidine(34) in tRNA(Ile2) + L-lysine + ATP = lysidine(34) in tRNA(Ile2) + AMP + diphosphate + H(+). Its function is as follows. Ligates lysine onto the cytidine present at position 34 of the AUA codon-specific tRNA(Ile) that contains the anticodon CAU, in an ATP-dependent manner. Cytidine is converted to lysidine, thus changing the amino acid specificity of the tRNA from methionine to isoleucine. In Lactobacillus gasseri (strain ATCC 33323 / DSM 20243 / BCRC 14619 / CIP 102991 / JCM 1131 / KCTC 3163 / NCIMB 11718 / NCTC 13722 / AM63), this protein is tRNA(Ile)-lysidine synthase.